Consider the following 260-residue polypeptide: Homeobox protein Hox-D11b (260 aa).

A compositionally biased stretch (low complexity) spans 1–14; it reads MFSSSFSYPSKTSP. Disordered regions lie at residues 1 to 21 and 151 to 206; these read MFSS…PFLA and ITPG…CTRR. Basic and acidic residues predominate over residues 167–179; it reads RSPDGESSEERAG. A DNA-binding region (homeobox; truncated) is located at residues 205-260; that stretch reads RRKKRCPYSKQQIIELEREFLFNIYINKDRRMQLSHLLRLTDRCVNNPLNQDSFFT.

Belongs to the Abd-B homeobox family.

It localises to the nucleus. In terms of biological role, sequence-specific transcription factor which is part of a developmental regulatory system that provides cells with specific positional identities on the anterior-posterior axis. This Takifugu rubripes (Japanese pufferfish) protein is Homeobox protein Hox-D11b (hoxd11b).